A 126-amino-acid polypeptide reads, in one-letter code: Thioredoxin-like 3-3 (126 aa).

The tract at residues 1 to 24 (MRKQESEGANLEFESKSNDNGNVK) is disordered. A Thioredoxin domain is found at 5–126 (ESEGANLEFE…RLHDRLWLHS (122 aa)). Residues cysteine 55 and cysteine 58 each act as nucleophile in the active site. Cysteines 55 and 58 form a disulfide.

Belongs to the thioredoxin family.

Its function is as follows. Probable thiol-disulfide oxidoreductase that may participate in various redox reactions. This is Thioredoxin-like 3-3 from Arabidopsis thaliana (Mouse-ear cress).